Consider the following 162-residue polypeptide: Autophagy-related protein 8 (162 aa).

A compositionally biased stretch (basic and acidic residues) spans 1–27; that stretch reads MRSKFKDEHPFEKRKAEAERIRQKYSD. The segment at 1–42 is disordered; that stretch reads MRSKFKDEHPFEKRKAEAERIRQKYSDRIPPSPHSPASRLIG. Gly157 carries the Phosphatidylethanolamine amidated glycine lipid modification. Positions 158 to 162 are cleaved as a propeptide — removed in mature form; it reads GFETA.

This sequence belongs to the ATG8 family.

The protein resides in the cytoplasmic vesicle. It localises to the autophagosome membrane. Its subcellular location is the vacuole membrane. Functionally, ubiquitin-like modifier involved in autophagosome formation. With ATG4, mediates the delivery of the autophagosomes to the vacuole via the microtubule cytoskeleton. Required for selective autophagic degradation of the nucleus (nucleophagy) as well as for mitophagy which contributes to regulate mitochondrial quantity and quality by eliminating the mitochondria to a basal level to fulfill cellular energy requirements and preventing excess ROS production. Also participates in membrane fusion events that take place in the early secretory pathway. Also involved in endoplasmic reticulum-specific autophagic process and is essential for the survival of cells subjected to severe ER stress. The ATG8-PE conjugate mediates tethering between adjacent membranes and stimulates membrane hemifusion, leading to expansion of the autophagosomal membrane during autophagy. This chain is Autophagy-related protein 8, found in Colletotrichum higginsianum (strain IMI 349063) (Crucifer anthracnose fungus).